The chain runs to 137 residues: Large ribosomal subunit protein uL16 (137 aa).

This sequence belongs to the universal ribosomal protein uL16 family. Part of the 50S ribosomal subunit.

Its function is as follows. Binds 23S rRNA and is also seen to make contacts with the A and possibly P site tRNAs. In Streptococcus thermophilus (strain CNRZ 1066), this protein is Large ribosomal subunit protein uL16.